Here is a 400-residue protein sequence, read N- to C-terminus: MQELEMAGQGSLRLSRKSDTIVVLEKDLSTEQMVLSMGPQHPSTHGVLRLECLTDGEVVTEAEPYLGYLHRCFEKHCEHVDYPAIVPYTDRMDYLAGINSEMAYCVAVEKLLDLEIPRRVEFIRVIVSELNRIASHLVAIGTYAIDLGAFTPFLFCFRDREHILNMLEWATGARMLYNYIWVGGLAYDVPAGFNERVLEFVNYFRPKALELQQLLTENEIFVKRTKGIGIMPADVAINYGWSGPMLRGSGVQWDIRRNDPYSIYPELDFAVPVPDGKLSVVGDCLSRHLVRALEIEESLKIIEQCIDKMPGTQGFDPRSAVPKRVRPKAGEVYGRAENPRGELGFYIQSDGKSTSPLRCKARSSCFVNLSAMKDLSRGQLIPDLVAIIGSLDIVLGEVDR.

It belongs to the complex I 49 kDa subunit family. In terms of assembly, NDH-1 is composed of 14 different subunits. Subunits NuoB, C, D, E, F, and G constitute the peripheral sector of the complex.

The protein resides in the cell inner membrane. It catalyses the reaction a quinone + NADH + 5 H(+)(in) = a quinol + NAD(+) + 4 H(+)(out). Functionally, NDH-1 shuttles electrons from NADH, via FMN and iron-sulfur (Fe-S) centers, to quinones in the respiratory chain. The immediate electron acceptor for the enzyme in this species is believed to be a menaquinone. Couples the redox reaction to proton translocation (for every two electrons transferred, four hydrogen ions are translocated across the cytoplasmic membrane), and thus conserves the redox energy in a proton gradient. The protein is NADH-quinone oxidoreductase subunit D of Chlorobium phaeovibrioides (strain DSM 265 / 1930) (Prosthecochloris vibrioformis (strain DSM 265)).